Consider the following 833-residue polypeptide: Ventricular zone-expressed PH domain-containing protein homolog 1 (833 aa).

Residues 201-319 (TELLALMSQL…TYLVSQLANM (119 aa)) form an interaction with TGFBR1 region. Positions 458 to 505 (KGVGSDDGEDENRGDIPASISLSEIDPLGQGNDKLPFKTDTERSQLGE) are disordered. Residues 492–502 (LPFKTDTERSQ) are compositionally biased toward basic and acidic residues. Residues 663–833 (ESTFPQQKDL…RESREVTTYL (171 aa)) form an interaction with TGFBR1 region. A PH domain is found at 716 to 819 (QPLIEGKLKE…WLQCINVAVA (104 aa)).

The protein belongs to the MELT/VEPH family. As to quaternary structure, interacts with TGFBR1.

It is found in the cell membrane. Its function is as follows. Interacts with TGF-beta receptor type-1 (TGFBR1) and inhibits dissociation of activated SMAD2 from TGFBR1, impeding its nuclear accumulation and resulting in impaired TGF-beta signaling. May also affect FOXO, Hippo and Wnt signaling. The polypeptide is Ventricular zone-expressed PH domain-containing protein homolog 1 (VEPH1) (Homo sapiens (Human)).